We begin with the raw amino-acid sequence, 397 residues long: Mannonate dehydratase (397 aa).

It belongs to the mannonate dehydratase family. The cofactor is Fe(2+). It depends on Mn(2+) as a cofactor.

It carries out the reaction D-mannonate = 2-dehydro-3-deoxy-D-gluconate + H2O. It functions in the pathway carbohydrate metabolism; pentose and glucuronate interconversion. Catalyzes the dehydration of D-mannonate. The chain is Mannonate dehydratase from Yersinia pseudotuberculosis serotype O:1b (strain IP 31758).